Consider the following 396-residue polypeptide: MPTTPSPLALAQGLIRCPSVTPEEGGALAYLAGLLAAAGFSVERPVFSAPGTPDVENLYARIGADGPCLLLAGHTDVVPPGEPALWRHDPFAGVVEGGELHGRGAVDMKGGIACLAAASLAFLAERGPAFGGSIAFLVTGDEEGPAVNGTVKLLAWARARGERFDHCILAEPTNPDALGDMIKIGRRGSLTATLTVLGAQGHVAYPHRAENPIPGLIRLAGALLAAPLDEGTAHFDASNLEFTTIDVGNPASNVIPAQARAVLNIRFNDLWNPASLEAELRRRLDAAAGNAVRYRLDVQPTNAVAFLTQPDAFVDLVTAAIEAETGRRPALSTTGGTSDARFIKEACPVIEFGLVGQTMHQVDERVAVADLDRLAAIFRRILDAYFPASPPPAERA.

Residue His74 coordinates Zn(2+). The active site involves Asp76. A Zn(2+)-binding site is contributed by Asp107. Residue Glu142 is the Proton acceptor of the active site. Zn(2+) contacts are provided by Glu143, Glu171, and His360.

This sequence belongs to the peptidase M20A family. DapE subfamily. As to quaternary structure, homodimer. The cofactor is Zn(2+). Requires Co(2+) as cofactor.

The catalysed reaction is N-succinyl-(2S,6S)-2,6-diaminopimelate + H2O = (2S,6S)-2,6-diaminopimelate + succinate. It functions in the pathway amino-acid biosynthesis; L-lysine biosynthesis via DAP pathway; LL-2,6-diaminopimelate from (S)-tetrahydrodipicolinate (succinylase route): step 3/3. Catalyzes the hydrolysis of N-succinyl-L,L-diaminopimelic acid (SDAP), forming succinate and LL-2,6-diaminopimelate (DAP), an intermediate involved in the bacterial biosynthesis of lysine and meso-diaminopimelic acid, an essential component of bacterial cell walls. The protein is Succinyl-diaminopimelate desuccinylase of Methylobacterium sp. (strain 4-46).